The sequence spans 239 residues: Ribose-5-phosphate isomerase A (239 aa).

Substrate is bound by residues 40-43 (SGST), 96-99 (DGAD), and 110-113 (KGGG). Catalysis depends on Glu119, which acts as the Proton acceptor. Residue Lys137 participates in substrate binding.

It belongs to the ribose 5-phosphate isomerase family. As to quaternary structure, homodimer.

The enzyme catalyses aldehydo-D-ribose 5-phosphate = D-ribulose 5-phosphate. The protein operates within carbohydrate degradation; pentose phosphate pathway; D-ribose 5-phosphate from D-ribulose 5-phosphate (non-oxidative stage): step 1/1. Catalyzes the reversible conversion of ribose-5-phosphate to ribulose 5-phosphate. This chain is Ribose-5-phosphate isomerase A, found in Methanococcus maripaludis (strain DSM 14266 / JCM 13030 / NBRC 101832 / S2 / LL).